Here is a 455-residue protein sequence, read N- to C-terminus: Carbamoyl phosphate synthase arginine-specific small chain (455 aa).

Residues 1 to 28 (MFARFCKAIPAKGRAFPSVNASIQSRLM) constitute a mitochondrion transit peptide. One can recognise a Glutamine amidotransferase type-1 domain in the interval 219–406 (HVAVIDCGVK…IDSVRKYKAN (188 aa)). Residue Cys-295 is the Nucleophile of the active site. Active-site residues include His-379 and Glu-381.

Belongs to the CarA family. Heterodimer composed of 2 chains; the small (or glutamine) chain promotes the hydrolysis of glutamine to ammonia, which is used by the large (or ammonia) chain to synthesize carbamoyl phosphate.

The protein resides in the mitochondrion matrix. The enzyme catalyses hydrogencarbonate + L-glutamine + 2 ATP + H2O = carbamoyl phosphate + L-glutamate + 2 ADP + phosphate + 2 H(+). It catalyses the reaction L-glutamine + H2O = L-glutamate + NH4(+). It participates in amino-acid biosynthesis; L-arginine biosynthesis; carbamoyl phosphate from bicarbonate: step 1/1. In terms of biological role, small subunit of the arginine-specific carbamoyl phosphate synthase (CPSase). CPSase catalyzes the formation of carbamoyl phosphate from the ammonia moiety of glutamine, carbonate, and phosphate donated by ATP, the first step of the arginine biosynthetic pathway. The small subunit (glutamine amidotransferase) binds and cleaves glutamine to supply the large subunit with the substrate ammonia. This chain is Carbamoyl phosphate synthase arginine-specific small chain (cpa1), found in Aspergillus clavatus (strain ATCC 1007 / CBS 513.65 / DSM 816 / NCTC 3887 / NRRL 1 / QM 1276 / 107).